We begin with the raw amino-acid sequence, 108 residues long: Mitochondrial pyruvate carrier 4 (108 aa).

3 helical membrane-spanning segments follow: residues 19-35 (IHFWAPTFKWGISIANI), 51-67 (IAVTCTGVIWSRYSMVI), and 74-90 (LFSVNVAMAGTGIYQLA).

Belongs to the mitochondrial pyruvate carrier (MPC) (TC 2.A.105) family.

It is found in the mitochondrion inner membrane. Its function is as follows. Mediates the uptake of pyruvate into mitochondria. The polypeptide is Mitochondrial pyruvate carrier 4 (Arabidopsis thaliana (Mouse-ear cress)).